Consider the following 72-residue polypeptide: Cytotoxin 9 (72 aa).

The signal sequence occupies residues 1–12; it reads VVTIVCLDLGYT. Cystine bridges form between Cys15/Cys33, Cys26/Cys50, Cys54/Cys65, and Cys66/Cys71.

It belongs to the three-finger toxin family. Short-chain subfamily. Type IA cytotoxin sub-subfamily. As to quaternary structure, monomer in solution; Homodimer and oligomer in the presence of negatively charged lipids forming a pore with a size ranging between 20 and 30 Angstroms. As to expression, expressed by the venom gland.

It is found in the secreted. Functionally, shows cytolytic activity on many different cells by forming a pore in lipid membranes. In vivo, increases heart rate or kills the animal by cardiac arrest. In addition, it binds to heparin with high affinity, interacts with Kv channel-interacting protein 1 (KCNIP1) in a calcium-independent manner, and binds to integrin alpha-V/beta-3 (ITGAV/ITGB3) with moderate affinity. Preferentially binds acidic phospholipids like phosphatidylserine, phosphatidic acid and phosphatidyl glycerol. Has hemolytic activity towards human erythrocytes (EC(50)=0.171 uM) and cytolytic activity towards various cell lines. The protein is Cytotoxin 9 of Naja naja (Indian cobra).